Reading from the N-terminus, the 444-residue chain is Gustatory receptor 5a for trehalose (444 aa).

Residues 1–56 (MRQLKGRNRCNRAVRHLKIQGKMWLKNLKSGLEQIRESQVRGTRKNFLHDGSFHEA) lie on the Cytoplasmic side of the membrane. The chain crosses the membrane as a helical span at residues 57–77 (VAPVLAVAQCFCLMPVCGISA). The Extracellular segment spans residues 78–178 (PTYRGLSFNR…RARPARRLKL (101 aa)). Residues 179-199 (VAFVLLVVSLMEHLLSIISVV) form a helical membrane-spanning segment. Topologically, residues 200 to 214 (YYDFCPRRSDPVESY) are cytoplasmic. A helical membrane pass occupies residues 215-235 (LLGASAQLFEVFPYSNWLAWL). Residues 236–240 (GKIQN) are Extracellular-facing. The helical transmembrane segment at 241 to 261 (VLLTFGWSYMDIFLMMLGMGL) threads the bilayer. Residues 262–305 (SEMLARLNRSLEQQVRQPMPEAYWTWSRTLYRSIVELIREVDDA) lie on the Cytoplasmic side of the membrane. A helical membrane pass occupies residues 306–326 (VSGIMLISFGSNLYFICLQLL). Residues 327-338 (KSINTMPSSAHA) are Extracellular-facing. A helical transmembrane segment spans residues 339–359 (VYFYFSLLFLLSRSTAVLLFV). Topologically, residues 360-410 (SAINDQAREPLRLLRLVPLKGYHPEVFRFAAELASDQVALTGLKFFNVTRK) are cytoplasmic. The helical transmembrane segment at 411–431 (LFLAMAGTVATYELVLIQFHE) threads the bilayer. At 432–444 (DKKTWDCSPFNLD) the chain is on the extracellular side.

This sequence belongs to the insect chemoreceptor superfamily. Gustatory receptor (GR) family. Gr5a subfamily. Expressed in labellar chemosensory neurons.

It is found in the cell membrane. Gustatory receptor required for response to the sugar trehalose in taste neurons. Gr5a neurons selectively respond to sugars, in contrast to Gr66a cells which respond to bitter compounds. Flies are attracted to sugars and avoid bitter substances, suggesting that Gr5a neuron activity is sufficient to mediate acceptance behavior. Sugar signal transduction occurs through coupling with G-proteins such as Galpha49B and G-salpha60A. The polypeptide is Gustatory receptor 5a for trehalose (Gr5a) (Drosophila melanogaster (Fruit fly)).